The primary structure comprises 415 residues: Isocitrate dehydrogenase [NADP] (415 aa).

Residues 77–79 (TIT) and Arg84 each bind NADP(+). Thr79 serves as a coordination point for substrate. Residues 96-102 (SPNGTIR), Arg111, and Arg134 each bind substrate. Asp254 is a binding site for Mn(2+). Lys262 is an NADP(+) binding site. Asp277 provides a ligand contact to Mn(2+). NADP(+) is bound by residues 312–317 (GTVTRH) and Asn330.

This sequence belongs to the isocitrate and isopropylmalate dehydrogenases family. As to quaternary structure, heterodimer. Requires Mg(2+) as cofactor. The cofactor is Mn(2+).

The protein localises to the cytoplasm. The catalysed reaction is D-threo-isocitrate + NADP(+) = 2-oxoglutarate + CO2 + NADPH. In terms of biological role, may supply 2-oxoglutarate for amino acid biosynthesis and ammonia assimilation via the glutamine synthetase/glutamate synthase (GS/GOGAT) pathway. This is Isocitrate dehydrogenase [NADP] from Nicotiana tabacum (Common tobacco).